The chain runs to 139 residues: 3-hydroxyacyl-[acyl-carrier-protein] dehydratase FabZ (139 aa).

The active site involves His46.

The protein belongs to the thioester dehydratase family. FabZ subfamily.

It localises to the cytoplasm. It catalyses the reaction a (3R)-hydroxyacyl-[ACP] = a (2E)-enoyl-[ACP] + H2O. Its function is as follows. Involved in unsaturated fatty acids biosynthesis. Catalyzes the dehydration of short chain beta-hydroxyacyl-ACPs and long chain saturated and unsaturated beta-hydroxyacyl-ACPs. This is 3-hydroxyacyl-[acyl-carrier-protein] dehydratase FabZ from Streptococcus pyogenes serotype M1.